Consider the following 80-residue polypeptide: Adipogenin (80 aa).

Residues 16–36 form a helical membrane-spanning segment; the sequence is FLVFWLCLPVALLLFLTIVWL. Position 63 is a phosphoserine (S63).

It belongs to the adipogenin family. Selectively expressed in adipose tissue where it is particularly enriched in brown adipose tissue. In adipose tissue, expressed exclusively in adipocytes and not in the stromal-vascular cell population. Expressed at much lower levels in heart, stomach and muscle and barely detected in kidney and lung.

It is found in the membrane. The protein resides in the nucleus. Plays a role in stimulating adipocyte differentiation and development. This Mus musculus (Mouse) protein is Adipogenin (Adig).